We begin with the raw amino-acid sequence, 405 residues long: Tyrosine--tRNA ligase (405 aa).

The 'HIGH' region signature appears at 48–57 (PSRPDLHLGH). A 'KMSKS' region motif is present at residues 232–236 (KMSKS). Position 235 (Lys-235) interacts with ATP. One can recognise an S4 RNA-binding domain in the interval 339-400 (LPLVDLLTTL…AGKRKFFRIA (62 aa)).

The protein belongs to the class-I aminoacyl-tRNA synthetase family. TyrS type 2 subfamily. As to quaternary structure, homodimer.

The protein resides in the cytoplasm. The enzyme catalyses tRNA(Tyr) + L-tyrosine + ATP = L-tyrosyl-tRNA(Tyr) + AMP + diphosphate + H(+). In terms of biological role, catalyzes the attachment of tyrosine to tRNA(Tyr) in a two-step reaction: tyrosine is first activated by ATP to form Tyr-AMP and then transferred to the acceptor end of tRNA(Tyr). The protein is Tyrosine--tRNA ligase of Chlorobium luteolum (strain DSM 273 / BCRC 81028 / 2530) (Pelodictyon luteolum).